A 662-amino-acid chain; its full sequence is Probable actin-related protein 8 (662 aa).

Composition is skewed to basic and acidic residues over residues 50-59 and 67-77; these read AGEKDAKETE and TKQDDSKKSQV. The tract at residues 50 to 92 is disordered; that stretch reads AGEKDAKETESESANGDTKQDDSKKSQVEEEEDGIEESELGEE. Acidic residues predominate over residues 78–89; sequence EEEEDGIEESEL. Position 339 to 342 (339 to 342) interacts with ATP; the sequence is DMGA.

The protein belongs to the actin family. Component of the chromatin remodeling Ino80 complex. Exists as monomers and dimers, but the dimer is most probably the biologically relevant form required for stable interactions with histones that exploits the twofold symmetry of the nucleosome core.

The protein localises to the nucleus. In terms of biological role, probably involved in transcription regulation via its interaction with the INO80 complex, a chromatin remodeling complex. Exhibits low basal ATPase activity, and unable to polymerize. Strongly prefer nucleosomes and H3-H4 tetramers over H2A-H2B dimers, suggesting it may act as a nucleosome recognition module within the complex. The sequence is that of Probable actin-related protein 8 from Schizosaccharomyces pombe (strain 972 / ATCC 24843) (Fission yeast).